The primary structure comprises 543 residues: UBP9-binding protein bun62 (543 aa).

S43 is modified (phosphoserine). WD repeat units lie at residues 239–279 (LNSS…QPLH), 320–361 (FSKS…DVFH), 362–401 (SYFA…LVAR), 404–448 (GHKS…IHRP), and 513–542 (VDDS…TWQR).

As to quaternary structure, interacts with ubp9 and bun107.

It localises to the nucleus. The protein resides in the cytoplasm. It is found in the cell tip. Functionally, required for the ubp9 recruitment to septa and cell tips but also for its enzymatic activity at these specific locations. The chain is UBP9-binding protein bun62 (bun62) from Schizosaccharomyces pombe (strain 972 / ATCC 24843) (Fission yeast).